The chain runs to 1183 residues: DNA-directed RNA polymerase subunit beta (1183 aa).

Belongs to the RNA polymerase beta chain family. The RNAP catalytic core consists of 2 alpha, 1 beta, 1 beta' and 1 omega subunit. When a sigma factor is associated with the core the holoenzyme is formed, which can initiate transcription.

It carries out the reaction RNA(n) + a ribonucleoside 5'-triphosphate = RNA(n+1) + diphosphate. DNA-dependent RNA polymerase catalyzes the transcription of DNA into RNA using the four ribonucleoside triphosphates as substrates. In Staphylococcus aureus (strain Mu50 / ATCC 700699), this protein is DNA-directed RNA polymerase subunit beta.